The following is a 436-amino-acid chain: 3-ketoacyl-CoA thiolase (436 aa).

Catalysis depends on cysteine 99, which acts as the Acyl-thioester intermediate. Active-site proton acceptor residues include histidine 392 and cysteine 422.

It belongs to the thiolase-like superfamily. Thiolase family. As to quaternary structure, heterotetramer of two alpha chains (FadJ) and two beta chains (FadI).

It is found in the cytoplasm. The catalysed reaction is an acyl-CoA + acetyl-CoA = a 3-oxoacyl-CoA + CoA. It participates in lipid metabolism; fatty acid beta-oxidation. Its function is as follows. Catalyzes the final step of fatty acid oxidation in which acetyl-CoA is released and the CoA ester of a fatty acid two carbons shorter is formed. The chain is 3-ketoacyl-CoA thiolase from Escherichia coli O9:H4 (strain HS).